A 432-amino-acid polypeptide reads, in one-letter code: Eukaryotic translation initiation factor 3 subunit E (432 aa).

The PCI domain occupies 221–401; sequence VYYNYPKGRD…MGVKSVSIHE (181 aa).

This sequence belongs to the eIF-3 subunit E family. Component of the eukaryotic translation initiation factor 3 (eIF-3) complex.

Its subcellular location is the cytoplasm. Functionally, component of the eukaryotic translation initiation factor 3 (eIF-3) complex, which is involved in protein synthesis of a specialized repertoire of mRNAs and, together with other initiation factors, stimulates binding of mRNA and methionyl-tRNAi to the 40S ribosome. The eIF-3 complex specifically targets and initiates translation of a subset of mRNAs involved in cell proliferation. In Caenorhabditis elegans, this protein is Eukaryotic translation initiation factor 3 subunit E.